Consider the following 74-residue polypeptide: Acyl carrier protein (74 aa).

The region spanning 1-73 (MAVFEKVQEI…DLVAYVEEKT (73 aa)) is the Carrier domain. Residue serine 35 is modified to O-(pantetheine 4'-phosphoryl)serine.

This sequence belongs to the acyl carrier protein (ACP) family. Post-translationally, 4'-phosphopantetheine is transferred from CoA to a specific serine of apo-ACP by AcpS. This modification is essential for activity because fatty acids are bound in thioester linkage to the sulfhydryl of the prosthetic group.

Its subcellular location is the cytoplasm. Its pathway is lipid metabolism; fatty acid biosynthesis. Carrier of the growing fatty acid chain in fatty acid biosynthesis. This Streptococcus thermophilus (strain CNRZ 1066) protein is Acyl carrier protein.